We begin with the raw amino-acid sequence, 637 residues long: MEGGCGSQWKAAGLLFCVMVFASAERPVFTNHFLVELHKDGEEEARQVAAEHGFGVRKLPFAEGLYHFYHNGLAKAKRRRSLHHKRQLERDPRIKMALQQEGFDRKKRGYRDINEIDINMNDPLFTKQWYLFNTGQADGTPGLDLNVAEAWELGYTGKGVTIGIMDDGIDYLHPDLAYNYNSDASYDFSSNDPYPYPRYTDDWFNSHGTRCAGEVSAAASNNICGVGVAYNSKVAGIRMLDQPFMTDIIEASSISHMPQLIDIYSASWGPTDNGKTVDGPRELTLQAMADGVNKGRGGKGSIYVWASGDGGSYDDCNCDGYASSMWTISINSAINDGRTALYDESCSSTLASTFSNGRKRNPEAGVATTDLYGNCTLRHSGTSAAAPEAAGVFALALEANVDLTWRDMQHLTVLTSKRNQLHDEVHQWRRNGVGLEFNHLFGYGVLDAGAMVKMAKDWKTVPERFHCVGGSVQNPEKIPPTGKLVLTLQTNACEGKENFVRYLEHVQAVITVNATRRGDLNINMTSPMGTKSILLSRRPRDDDSKVGFDKWPFMTTHTWGEDARGTWTLELGFVGSAPQKGLLKEWTLMLHGTQSAPYIDQVVRDYQSKLAMSKKQELEEELDEAVERSLQSILRKN.

Residues 1-24 (MEGGCGSQWKAAGLLFCVMVFASA) form the signal peptide. Positions 25 to 108 (ERPVFTNHFL…QQEGFDRKKR (84 aa)) are excised as a propeptide. The 325-residue stretch at 128-452 (QWYLFNTGQA…YGVLDAGAMV (325 aa)) folds into the Peptidase S8 domain. Active-site charge relay system residues include D166 and H207. Disulfide bonds link C224–C375 and C316–C346. N374 carries an N-linked (GlcNAc...) asparagine glycan. The active-site Charge relay system is S383. The P/Homo B domain occupies 460-596 (TVPERFHCVG…TLMLHGTQSA (137 aa)). C467 and C493 are oxidised to a cystine. N513 and N523 each carry an N-linked (GlcNAc...) asparagine glycan.

This sequence belongs to the peptidase S8 family. Furin subfamily.

It localises to the cytoplasmic vesicle. Its subcellular location is the secretory vesicle. The protein resides in the secreted. The enzyme catalyses Release of protein hormones and neuropeptides from their precursors, generally by hydrolysis of -Lys-Arg-|- bonds.. Functionally, serine endopeptidase which is involved in the processing of hormone and other protein precursors at sites comprised of pairs of basic amino acid residues. Responsible for the release of glucagon from proglucagon in pancreatic A cells. This chain is Neuroendocrine convertase 2 (Pcsk2), found in Rattus norvegicus (Rat).